A 90-amino-acid chain; its full sequence is uncharacterized protein (90 aa).

This is an uncharacterized protein from Aedes vexans (Inland floodwater mosquito).